Consider the following 384-residue polypeptide: Putative 8-amino-7-oxononanoate synthase (384 aa).

Substrate is bound at residue Arg-22. 109–110 lines the pyridoxal 5'-phosphate pocket; that stretch reads GY. Position 134 (His-134) interacts with substrate. Pyridoxal 5'-phosphate-binding positions include Ser-182, 207-210, and 236-239; these read DDAH and TLSK. At Lys-239 the chain carries N6-(pyridoxal phosphate)lysine. Residue Thr-348 participates in substrate binding.

It belongs to the class-II pyridoxal-phosphate-dependent aminotransferase family. BioF subfamily. As to quaternary structure, homodimer. Pyridoxal 5'-phosphate is required as a cofactor.

It carries out the reaction 6-carboxyhexanoyl-[ACP] + L-alanine + H(+) = (8S)-8-amino-7-oxononanoate + holo-[ACP] + CO2. It functions in the pathway cofactor biosynthesis; biotin biosynthesis. Its function is as follows. Catalyzes the decarboxylative condensation of pimeloyl-[acyl-carrier protein] and L-alanine to produce 8-amino-7-oxononanoate (AON), [acyl-carrier protein], and carbon dioxide. The polypeptide is Putative 8-amino-7-oxononanoate synthase (bioF) (Caulobacter vibrioides (strain ATCC 19089 / CIP 103742 / CB 15) (Caulobacter crescentus)).